The following is a 315-amino-acid chain: Calumenin (315 aa).

Positions 1-19 (MNKRPLLLCLGLWVACTLS) are cleaved as a signal peptide. 6 EF-hand domains span residues 68–103 (ESKERLGMIVGKIDLDNDGYVTEGELTAWIKKAQKK), 104–139 (YVYDNVERQWQEFDLSQDGLVSWDEYRNVTYGTYLD), 151–186 (QMMIRDERRFKMADKDGDLVATKEEFTAFLHPEEFD), 188–223 (MKDIVVLETMEDIDKNGDGLIDLEEYIGDMYNHDGD), 229–264 (WVKTEREQFMEFRDKNHDGKMDKEETKDWILPSDYD), and 265–300 (HSEAESRHLVYESDHNQDGKLTREEIVDKYDLFVGS). Asp81, Asp83, Asp85, Tyr87, Glu92, Asp117, Ser119, Asp121, and Glu128 together coordinate Ca(2+). Asn131 is a glycosylation site (N-linked (GlcNAc...) asparagine). Residues Asp164, Asp166, Asp168, Glu175, Asp201, Asn203, Asp205, Glu212, Asp242, Asn244, Asp246, Lys248, Glu253, Asp278, Asn280, Asp282, Lys284, and Glu289 each contribute to the Ca(2+) site. The Prevents secretion from ER motif lies at 312–315 (HDEF).

It belongs to the CREC family. Interacts with ggcx.

It is found in the endoplasmic reticulum membrane. The protein resides in the golgi apparatus. It localises to the secreted. Its subcellular location is the melanosome. The protein localises to the sarcoplasmic reticulum lumen. Functionally, involved in regulation of vitamin K-dependent carboxylation of multiple N-terminal glutamate residues. Seems to inhibit gamma-carboxylase ggcx. Binds 7 calcium ions with a low affinity. The chain is Calumenin (calu) from Xenopus laevis (African clawed frog).